Here is a 105-residue protein sequence, read N- to C-terminus: Cell division protein FtsB (105 aa).

The Cytoplasmic portion of the chain corresponds to 1–3 (MGK). The helical transmembrane segment at 4–21 (LTLLLLALLVWLQYSLWF) threads the bilayer. At 22–105 (GKNGLHDYTR…QASGQQQNNR (84 aa)) the chain is on the periplasmic side. Residues 33-62 (NDDVTAQQATNAKLKARNDQLFAEIDDLNG) are a coiled coil.

Belongs to the FtsB family. As to quaternary structure, part of a complex composed of FtsB, FtsL and FtsQ.

It is found in the cell inner membrane. Functionally, essential cell division protein. May link together the upstream cell division proteins, which are predominantly cytoplasmic, with the downstream cell division proteins, which are predominantly periplasmic. The polypeptide is Cell division protein FtsB (Klebsiella aerogenes (Enterobacter aerogenes)).